Reading from the N-terminus, the 158-residue chain is Endoribonuclease YbeY (158 aa).

The Zn(2+) site is built by His118, His122, and His128.

The protein belongs to the endoribonuclease YbeY family. Requires Zn(2+) as cofactor.

The protein resides in the cytoplasm. In terms of biological role, single strand-specific metallo-endoribonuclease involved in late-stage 70S ribosome quality control and in maturation of the 3' terminus of the 16S rRNA. In Haemophilus ducreyi (strain 35000HP / ATCC 700724), this protein is Endoribonuclease YbeY.